A 367-amino-acid chain; its full sequence is Probable butyrate kinase (367 aa).

The protein belongs to the acetokinase family.

The protein localises to the cytoplasm. It catalyses the reaction butanoate + ATP = butanoyl phosphate + ADP. This chain is Probable butyrate kinase, found in Bacillus cereus (strain ATCC 14579 / DSM 31 / CCUG 7414 / JCM 2152 / NBRC 15305 / NCIMB 9373 / NCTC 2599 / NRRL B-3711).